The primary structure comprises 190 residues: Small ribosomal subunit protein eS7 (190 aa).

The protein belongs to the eukaryotic ribosomal protein eS7 family.

In Manduca sexta (Tobacco hawkmoth), this protein is Small ribosomal subunit protein eS7 (RpS7).